We begin with the raw amino-acid sequence, 180 residues long: Large ribosomal subunit protein uL5 (180 aa).

This sequence belongs to the universal ribosomal protein uL5 family. In terms of assembly, part of the 50S ribosomal subunit; part of the 5S rRNA/L5/L18/L25 subcomplex. Contacts the 5S rRNA and the P site tRNA. Forms a bridge to the 30S subunit in the 70S ribosome.

In terms of biological role, this is one of the proteins that bind and probably mediate the attachment of the 5S RNA into the large ribosomal subunit, where it forms part of the central protuberance. In the 70S ribosome it contacts protein S13 of the 30S subunit (bridge B1b), connecting the 2 subunits; this bridge is implicated in subunit movement. Contacts the P site tRNA; the 5S rRNA and some of its associated proteins might help stabilize positioning of ribosome-bound tRNAs. This is Large ribosomal subunit protein uL5 from Streptococcus pneumoniae (strain JJA).